A 133-amino-acid polypeptide reads, in one-letter code: Small ribosomal subunit protein bS6 (133 aa).

The protein belongs to the bacterial ribosomal protein bS6 family.

Its function is as follows. Binds together with bS18 to 16S ribosomal RNA. The polypeptide is Small ribosomal subunit protein bS6 (Chlorobium limicola (strain DSM 245 / NBRC 103803 / 6330)).